We begin with the raw amino-acid sequence, 888 residues long: 3-hydroxy-3-methylglutaryl-coenzyme A reductase (888 aa).

Over 1–9 (MLSRLFRMH) the chain is Cytoplasmic. A helical membrane pass occupies residues 10-39 (GLFVASHPWEVIVGTVTLTICMMSMNMFTG). The Lumenal portion of the chain corresponds to 40-56 (NNKICGWNYECPKFEED). Residues 57–78 (VLSSDIIILTITRCIAILYIYF) form a helical membrane-spanning segment. Residues 61 to 218 (DIIILTITRC…MTFFPACVSL (158 aa)) form the SSD domain. Positions 75–78 (YIYF) match the INSIG-binding motif motif. Topologically, residues 79–89 (QFQNLRQLGSK) are cytoplasmic. K89 is covalently cross-linked (Glycyl lysine isopeptide (Lys-Gly) (interchain with G-Cter in ubiquitin)). The helical transmembrane segment at 90-114 (YILGIAGLFTIFSSFVFSTVVIHFL) threads the bilayer. Residues 115 to 123 (DKELTGLNE) are Lumenal-facing. The helical transmembrane segment at 124–149 (ALPFFLLLIDLSRASTLAKFALSSNS) threads the bilayer. Residues 150-159 (QDEVRENIAR) are Cytoplasmic-facing. The helical transmembrane segment at 160–187 (GMAILGPTFTLDALVECLVIGVGTMSGV) threads the bilayer. Over 188–191 (RQLE) the chain is Lumenal. A helical transmembrane segment spans residues 192 to 220 (IMCCFGCMSVLANYFVFMTFFPACVSLVL). Over 221-248 (ELSRESREGRPIWLLSHFARVLEEEENK) the chain is Cytoplasmic. Residue K248 forms a Glycyl lysine isopeptide (Lys-Gly) (interchain with G-Cter in ubiquitin) linkage. A helical membrane pass occupies residues 249–275 (PNPVTQRVKMIMSLGLVLVHAHSRWIA). Topologically, residues 276–314 (DPSPQNSTADTSKVSLGLDENVSKRIEPSVSLWQFYLSK) are lumenal. N-linked (GlcNAc...) asparagine glycans are attached at residues N281 and N296. A helical transmembrane segment spans residues 315–339 (MISMDIEQVITLSLALLLAVKYIFF). Over 340-888 (EQTETESTLS…LQGACTKKTA (549 aa)) the chain is Cytoplasmic. Residues E559, K691, and D767 each act as charge relay system in the active site. H866 functions as the Proton donor in the catalytic mechanism. Residue S872 is modified to Phosphoserine; by AMPK.

This sequence belongs to the HMG-CoA reductase family. In terms of assembly, homotetramer. Homodimer. Interacts (via its SSD) with INSIG1; the interaction, accelerated by sterols, leads to the recruitment of HMGCR to AMFR/gp78 for its ubiquitination by the sterol-mediated ERAD pathway. Interacts with UBIAD1. Undergoes sterol-mediated ubiquitination and ER-associated degradation (ERAD). Accumulation of sterols in the endoplasmic reticulum (ER) membrane, triggers binding of the reductase to the ER membrane protein INSIG1 or INSIG2. The INSIG1 binding leads to the recruitment of the ubiquitin ligase, AMFR/gp78, RNF139 or RNF145, initiating ubiquitination of the reductase. The ubiquitinated reductase is then extracted from the ER membrane and delivered to cytosolic 26S proteosomes by a mechanism probably mediated by the ATPase Valosin-containing protein VCP/p97. The INSIG2-binding leads to the recruitment of the ubiquitin ligase RNF139, initiating ubiquitination of the reductase. Lys-248 is the main site of ubiquitination. Ubiquitination is enhanced by the presence of a geranylgeranylated protein. Post-translationally, N-glycosylated. Deglycosylated by NGLY1 on release from the endoplasmic reticulum (ER) in a sterol-mediated manner. In terms of processing, phosphorylated. Phosphorylation at Ser-872 reduces the catalytic activity.

The protein localises to the endoplasmic reticulum membrane. It localises to the peroxisome membrane. It carries out the reaction (R)-mevalonate + 2 NADP(+) + CoA = (3S)-3-hydroxy-3-methylglutaryl-CoA + 2 NADPH + 2 H(+). The protein operates within metabolic intermediate biosynthesis; (R)-mevalonate biosynthesis; (R)-mevalonate from acetyl-CoA: step 3/3. Its activity is regulated as follows. Regulated by a negative feedback mechanism through sterols and non-sterol metabolites derived from mevalonate. Phosphorylation at Ser-872 down-regulates the catalytic activity. Catalyzes the conversion of (3S)-hydroxy-3-methylglutaryl-CoA (HMG-CoA) to mevalonic acid, the rate-limiting step in the synthesis of cholesterol and other isoprenoids, thus plays a critical role in cellular cholesterol homeostasis. The protein is 3-hydroxy-3-methylglutaryl-coenzyme A reductase (HMGCR) of Pongo abelii (Sumatran orangutan).